The sequence spans 329 residues: Glycerol-3-phosphate dehydrogenase [NAD(P)+] (329 aa).

NADPH-binding residues include S13, W14, H34, and K105. Positions 105, 134, and 136 each coordinate sn-glycerol 3-phosphate. Residue A138 coordinates NADPH. 5 residues coordinate sn-glycerol 3-phosphate: K189, D242, S252, R253, and N254. The active-site Proton acceptor is the K189. R253 contributes to the NADPH binding site. Residues V277 and E279 each coordinate NADPH.

The protein belongs to the NAD-dependent glycerol-3-phosphate dehydrogenase family.

The protein resides in the cytoplasm. It carries out the reaction sn-glycerol 3-phosphate + NAD(+) = dihydroxyacetone phosphate + NADH + H(+). The enzyme catalyses sn-glycerol 3-phosphate + NADP(+) = dihydroxyacetone phosphate + NADPH + H(+). It functions in the pathway membrane lipid metabolism; glycerophospholipid metabolism. Functionally, catalyzes the reduction of the glycolytic intermediate dihydroxyacetone phosphate (DHAP) to sn-glycerol 3-phosphate (G3P), the key precursor for phospholipid synthesis. The chain is Glycerol-3-phosphate dehydrogenase [NAD(P)+] from Legionella pneumophila subsp. pneumophila (strain Philadelphia 1 / ATCC 33152 / DSM 7513).